The sequence spans 356 residues: Glutamine synthetase (356 aa).

The 80-residue stretch at 26-105 (IMAEYVWVDA…VLAECWNAGG (80 aa)) folds into the GS beta-grasp domain. The GS catalytic domain occupies 112 to 356 (FRHDCVKVMD…TKALLQFSLA (245 aa)).

It belongs to the glutamine synthetase family. As to quaternary structure, homooctamer.

The protein localises to the cytoplasm. It catalyses the reaction L-glutamate + NH4(+) + ATP = L-glutamine + ADP + phosphate + H(+). The protein is Glutamine synthetase (GLN1) of Fusarium solani subsp. phaseoli (Nectria haematococca).